The primary structure comprises 158 residues: Globin CTT-I/CTT-IA (158 aa).

The N-terminal stretch at 1–15 (MKFLILALCVAAAMA) is a signal peptide. Residues 16-158 (GPSGDQIAAA…FVFSTLKNEL (143 aa)) enclose the Globin domain. The heme b site is built by His-74 and His-109.

Belongs to the globin family. Monomer.

In Chironomus thummi thummi (Midge), this protein is Globin CTT-I/CTT-IA (CTT-1).